The primary structure comprises 696 residues: Chitin synthase regulator SKT5 (696 aa).

Disordered regions lie at residues 37–67 (GQDF…SANQ) and 90–145 (QEED…IKKR). Residues 41–53 (SDNKENRENRDNE) show a composition bias toward basic and acidic residues. Residues 104 to 126 (LNNSNNTSLSSLGSTPTNSPSPG) show a composition bias toward low complexity. The segment covering 129–139 (RQTNSSTSLTK) has biased composition (polar residues). S148 carries the post-translational modification Phosphoserine. Sel1-like repeat units follow at residues 271-306 (SDAQ…KHGH), 307-342 (IESA…SRNH), 343-382 (PSAM…ARAN), 386-423 (AAAP…SLGH), 424-460 (VPSA…LKGD), 461-498 (SVAM…NAGL), and 499-534 (PKAQ…GNED). A phosphoserine mark is found at S561 and S563. T564 carries the phosphothreonine modification. Composition is skewed to polar residues over residues 576-593 (SNVG…TFFT), 605-634 (LQIN…SSAK), and 651-661 (VSLSNMGSSNM). Residues 576 to 696 (SNVGSNSRVS…GKKKKDCVIM (121 aa)) are disordered. Positions 662–675 (IRKDFPAVKTESKK) are enriched in basic and acidic residues. A compositionally biased stretch (basic residues) spans 680-696 (KNKKDKQGKKKKDCVIM). Cysteine methyl ester is present on C693. The S-farnesyl cysteine moiety is linked to residue C693. A propeptide spans 694 to 696 (VIM) (removed in mature form).

The protein belongs to the SKT5 family. May interact with CHS3 and seems to be an adapter (along with BNI4) to link CHS3 to septins. Post-translationally, farnesylation is required for chitin synthase CHS3 activity but is not required for SKT5 membrane association.

It localises to the cell membrane. Activator of the chitin synthase CHS3 which polymerizes chitin, a structural polymer of the fungal cell wall. The polypeptide is Chitin synthase regulator SKT5 (Saccharomyces cerevisiae (strain ATCC 204508 / S288c) (Baker's yeast)).